Reading from the N-terminus, the 536-residue chain is Lysosomal acid glucosylceramidase (536 aa).

Positions 1-39 (MELSSPSREEYPMPRGRVGIMAASLMGLLLLHTVSWVSG) are cleaved as a signal peptide. 2 cysteine pairs are disulfide-bonded: Cys43–Cys55 and Cys57–Cys62. N-linked (GlcNAc...) asparagine glycans are attached at residues Asn58, Asn98, Asn185, and Asn208. Glu274 functions as the Proton donor in the catalytic mechanism. Asn309 is a glycosylation site (N-linked (GlcNAc...) asparagine). Glu379 functions as the Nucleophile in the catalytic mechanism. Asn501 is a glycosylation site (N-linked (GlcNAc...) asparagine).

Belongs to the glycosyl hydrolase 30 family. In terms of assembly, interacts with saposin-C. Interacts with SCARB2. Interacts with TCP1. Interacts with GRN; this interaction prevents aggregation of GBA1-SCARB2 complex via interaction with HSPA1A upon stress.

It localises to the lysosome membrane. The catalysed reaction is a beta-D-glucosyl-(1&lt;-&gt;1')-N-acylsphing-4-enine + H2O = an N-acylsphing-4-enine + D-glucose. The enzyme catalyses a beta-D-galactosyl-(1&lt;-&gt;1')-N-acylsphing-4-enine + H2O = an N-acylsphing-4-enine + D-galactose. It carries out the reaction cholesteryl 3-beta-D-glucoside + H2O = cholesterol + D-glucose. It catalyses the reaction a beta-D-glucosyl-(1&lt;-&gt;1')-N-acylsphing-4-enine + cholesterol = cholesteryl 3-beta-D-glucoside + an N-acylsphing-4-enine. The catalysed reaction is beta-D-glucosyl-N-(9Z-octadecenoyl)-sphing-4E-enine + cholesterol = N-(9Z-octadecenoyl)-sphing-4-enine + cholesteryl 3-beta-D-glucoside. The enzyme catalyses beta-D-glucosyl-N-octanoylsphing-4E-enine + cholesterol = N-octanoylsphing-4-enine + cholesteryl 3-beta-D-glucoside. It carries out the reaction beta-D-glucosyl-N-dodecanoylsphing-4-enine + cholesterol = N-dodecanoylsphing-4-enine + cholesteryl 3-beta-D-glucoside. It catalyses the reaction beta-D-glucosyl-(1&lt;-&gt;1)-N-octadecanoylsphing-4-enine + cholesterol = N-octadecanoylsphing-4-enine + cholesteryl 3-beta-D-glucoside. The catalysed reaction is beta-D-glucosyl-(1&lt;-&gt;1')-N-(15Z-tetracosenoyl)-sphing-4-enine + cholesterol = N-(15Z-tetracosenoyl)-sphing-4-enine + cholesteryl 3-beta-D-glucoside. The enzyme catalyses a beta-D-galactosyl-(1&lt;-&gt;1')-N-acylsphing-4-enine + cholesterol = cholesteryl 3-beta-D-galactoside + an N-acylsphing-4-enine. It carries out the reaction 1-(beta-D-galactosyl)-N-dodecanoylsphing-4-enine + cholesterol = cholesteryl 3-beta-D-galactoside + N-dodecanoylsphing-4-enine. It catalyses the reaction a beta-D-xylosyl-(1&lt;-&gt;1')-N-acylsphing-4-enine + cholesterol = cholesteryl 3-beta-D-xyloside + an N-acylsphing-4-enine. The catalysed reaction is beta-D-xylosyl-(1&lt;-&gt;1')-N-(9Z-octadecenoyl)-sphing-4-enine + cholesterol = cholesteryl 3-beta-D-xyloside + N-(9Z-octadecenoyl)-sphing-4-enine. It functions in the pathway steroid metabolism; cholesterol metabolism. The protein operates within sphingolipid metabolism. Functionally, glucosylceramidase that catalyzes, within the lysosomal compartment, the hydrolysis of glucosylceramides/GlcCers (such as beta-D-glucosyl-(1&lt;-&gt;1')-N-acylsphing-4-enine) into free ceramides (such as N-acylsphing-4-enine) and glucose. Plays a central role in the degradation of complex lipids and the turnover of cellular membranes. Through the production of ceramides, participates in the PKC-activated salvage pathway of ceramide formation. Catalyzes the glucosylation of cholesterol, through a transglucosylation reaction where glucose is transferred from GlcCer to cholesterol. GlcCer containing mono-unsaturated fatty acids (such as beta-D-glucosyl-N-(9Z-octadecenoyl)-sphing-4-enine) are preferred as glucose donors for cholesterol glucosylation when compared with GlcCer containing same chain length of saturated fatty acids (such as beta-D-glucosyl-N-octadecanoyl-sphing-4-enine). Under specific conditions, may alternatively catalyze the reverse reaction, transferring glucose from cholesteryl 3-beta-D-glucoside to ceramide. Can also hydrolyze cholesteryl 3-beta-D-glucoside producing glucose and cholesterol. Catalyzes the hydrolysis of galactosylceramides/GalCers (such as beta-D-galactosyl-(1&lt;-&gt;1')-N-acylsphing-4-enine), as well as the transfer of galactose between GalCers and cholesterol in vitro, but with lower activity than with GlcCers. Contrary to GlcCer and GalCer, xylosylceramide/XylCer (such as beta-D-xyosyl-(1&lt;-&gt;1')-N-acylsphing-4-enine) is not a good substrate for hydrolysis, however it is a good xylose donor for transxylosylation activity to form cholesteryl 3-beta-D-xyloside. The polypeptide is Lysosomal acid glucosylceramidase (GBA1) (Bos taurus (Bovine)).